The chain runs to 172 residues: MSAQVSLELHHRISQFLFHEASLLDDWKFRDWLAQLDEEIRYTMRTTVNAQTRDRRKGVQPPTTWIFNDTKDQLERRIARLETGMAWAEEPPSRTRHLISNCQISETDIPNVFAVRVNYLLYRAQKERDETFYVGTRFDKVRRLEDDNWRLLERDIVLDQAVITSHNLSVLF.

Belongs to the bacterial ring-hydroxylating dioxygenase beta subunit family. This dioxygenase system consists of four proteins: the two subunits of the hydroxylase component (HcaE and HcaF), a ferredoxin (HcaC) and a ferredoxin reductase (HcaD).

It catalyses the reaction 3-phenylpropanoate + NADH + O2 + H(+) = 3-(cis-5,6-dihydroxycyclohexa-1,3-dien-1-yl)propanoate + NAD(+). The enzyme catalyses (E)-cinnamate + NADH + O2 + H(+) = (2E)-3-(cis-5,6-dihydroxycyclohexa-1,3-dien-1-yl)prop-2-enoate + NAD(+). It participates in aromatic compound metabolism; 3-phenylpropanoate degradation. Part of the multicomponent 3-phenylpropionate dioxygenase. Converts 3-phenylpropionic acid (PP) and cinnamic acid (CI) into 3-phenylpropionate-dihydrodiol (PP-dihydrodiol) and cinnamic acid-dihydrodiol (CI-dihydrodiol), respectively. This is 3-phenylpropionate/cinnamic acid dioxygenase subunit beta from Escherichia coli O139:H28 (strain E24377A / ETEC).